A 294-amino-acid polypeptide reads, in one-letter code: Ribosomal RNA small subunit methyltransferase A (294 aa).

Residues Asn33, Leu35, Gly60, Glu81, Asp106, and Asn131 each contribute to the S-adenosyl-L-methionine site.

This sequence belongs to the class I-like SAM-binding methyltransferase superfamily. rRNA adenine N(6)-methyltransferase family. RsmA subfamily.

Its subcellular location is the cytoplasm. The enzyme catalyses adenosine(1518)/adenosine(1519) in 16S rRNA + 4 S-adenosyl-L-methionine = N(6)-dimethyladenosine(1518)/N(6)-dimethyladenosine(1519) in 16S rRNA + 4 S-adenosyl-L-homocysteine + 4 H(+). Specifically dimethylates two adjacent adenosines (A1518 and A1519) in the loop of a conserved hairpin near the 3'-end of 16S rRNA in the 30S particle. May play a critical role in biogenesis of 30S subunits. The polypeptide is Ribosomal RNA small subunit methyltransferase A (Lactococcus lactis subsp. lactis (strain IL1403) (Streptococcus lactis)).